Here is a 264-residue protein sequence, read N- to C-terminus: Thymidylate synthase (264 aa).

Arginine 21 is a dUMP binding site. Histidine 51 is a binding site for (6R)-5,10-methylene-5,6,7,8-tetrahydrofolate. 126–127 (RR) contacts dUMP. Catalysis depends on cysteine 146, which acts as the Nucleophile. Residues 166 to 169 (RSCD), asparagine 177, and 207 to 209 (HLY) contribute to the dUMP site. A (6R)-5,10-methylene-5,6,7,8-tetrahydrofolate-binding site is contributed by aspartate 169. A (6R)-5,10-methylene-5,6,7,8-tetrahydrofolate-binding site is contributed by alanine 263.

It belongs to the thymidylate synthase family. Bacterial-type ThyA subfamily. In terms of assembly, homodimer.

Its subcellular location is the cytoplasm. The catalysed reaction is dUMP + (6R)-5,10-methylene-5,6,7,8-tetrahydrofolate = 7,8-dihydrofolate + dTMP. Its pathway is pyrimidine metabolism; dTTP biosynthesis. Functionally, catalyzes the reductive methylation of 2'-deoxyuridine-5'-monophosphate (dUMP) to 2'-deoxythymidine-5'-monophosphate (dTMP) while utilizing 5,10-methylenetetrahydrofolate (mTHF) as the methyl donor and reductant in the reaction, yielding dihydrofolate (DHF) as a by-product. This enzymatic reaction provides an intracellular de novo source of dTMP, an essential precursor for DNA biosynthesis. This Shewanella amazonensis (strain ATCC BAA-1098 / SB2B) protein is Thymidylate synthase.